Here is a 70-residue protein sequence, read N- to C-terminus: Aurein-3.1 (70 aa).

Positions 1–22 (MAFLKKSLFLVLFLGLVSLSIC) are cleaved as a signal peptide. Positions 23 to 49 (EKEKRQNEEDEDENEAANHEEGSEEKR) are excised as a propeptide. The segment at 27–48 (RQNEEDEDENEAANHEEGSEEK) is disordered. Basic and acidic residues predominate over residues 38–48 (AANHEEGSEEK). Isoleucine amide is present on Ile-66.

As to expression, expressed by the skin dorsal glands.

It localises to the secreted. The protein localises to the target cell membrane. Its function is as follows. Amphipathic alpha-helical antimicrobial peptide with weak to potent activity against Gram-positive bacteria, and no activity against Gram-negative bacteria. Probably acts by disturbing membrane functions with its amphipathic structure. Shows anticancer activity. The polypeptide is Aurein-3.1 (Ranoidea aurea (Green and golden bell frog)).